Consider the following 354-residue polypeptide: 3-isopropylmalate dehydrogenase (354 aa).

An NAD(+)-binding site is contributed by 76–87; that stretch reads GPRWDSAKERPE. Substrate is bound by residues Arg94, Arg104, Arg130, and Asp215. Mg(2+) contacts are provided by Asp215, Asp239, and Asp243. An NAD(+)-binding site is contributed by 273 to 285; the sequence is GSAPDIAGKNKAN.

This sequence belongs to the isocitrate and isopropylmalate dehydrogenases family. LeuB type 1 subfamily. In terms of assembly, homodimer. It depends on Mg(2+) as a cofactor. The cofactor is Mn(2+).

Its subcellular location is the cytoplasm. It carries out the reaction (2R,3S)-3-isopropylmalate + NAD(+) = 4-methyl-2-oxopentanoate + CO2 + NADH. Its pathway is amino-acid biosynthesis; L-leucine biosynthesis; L-leucine from 3-methyl-2-oxobutanoate: step 3/4. Functionally, catalyzes the oxidation of 3-carboxy-2-hydroxy-4-methylpentanoate (3-isopropylmalate) to 3-carboxy-4-methyl-2-oxopentanoate. The product decarboxylates to 4-methyl-2 oxopentanoate. This is 3-isopropylmalate dehydrogenase from Bacillus cereus (strain ATCC 14579 / DSM 31 / CCUG 7414 / JCM 2152 / NBRC 15305 / NCIMB 9373 / NCTC 2599 / NRRL B-3711).